A 266-amino-acid polypeptide reads, in one-letter code: E3 ubiquitin-protein ligase RNF170 (266 aa).

The Lumenal portion of the chain corresponds to 1-26 (MEGSVCVDGAAAPAPDEASLIEGVSN). Residues 27–47 (AVLLVLVLSVTLLAGLTTLLC) traverse the membrane as a helical segment. Residues 48 to 209 (RSEQQRIHPE…GGLFWMFRVR (162 aa)) lie on the Cytoplasmic side of the membrane. The RING-type zinc-finger motif lies at 88–131 (CPVCLQQAVLPVETNCGHLFCGSCIIAYWRYGTWLGAISCPICR). The chain crosses the membrane as a helical span at residues 210–230 (ILLCVCGALAYLVSPLDFLPE). A topological domain (lumenal) is located at residue glycine 231. The chain crosses the membrane as a helical span at residues 232 to 252 (VLGLLGFLDDFFVILLLFIYI). Over 253–266 (SIMYREVVTQRLAG) the chain is Cytoplasmic.

As to expression, highly expressed in the developing brain, and less within intersomitic structures of the trunk.

Its subcellular location is the endoplasmic reticulum membrane. It catalyses the reaction S-ubiquitinyl-[E2 ubiquitin-conjugating enzyme]-L-cysteine + [acceptor protein]-L-lysine = [E2 ubiquitin-conjugating enzyme]-L-cysteine + N(6)-ubiquitinyl-[acceptor protein]-L-lysine.. It functions in the pathway protein modification; protein ubiquitination. Its function is as follows. E3 ubiquitin-protein ligase that plays an essential role in stimulus-induced inositol 1,4,5-trisphosphate receptor (ITPR) ubiquitination and degradation via the endoplasmic reticulum-associated degradation (ERAD) pathway. Also involved in ITPR turnover in resting cells. The sequence is that of E3 ubiquitin-protein ligase RNF170 (rnf170) from Danio rerio (Zebrafish).